A 369-amino-acid chain; its full sequence is Flagellar P-ring protein (369 aa).

An N-terminal signal peptide occupies residues 1 to 24 (MSKTISLLKFIICILISLCSFTYA).

Belongs to the FlgI family. As to quaternary structure, the basal body constitutes a major portion of the flagellar organelle and consists of four rings (L,P,S, and M) mounted on a central rod.

It localises to the bacterial flagellum basal body. Assembles around the rod to form the L-ring and probably protects the motor/basal body from shearing forces during rotation. The polypeptide is Flagellar P-ring protein (Buchnera aphidicola subsp. Schizaphis graminum (strain Sg)).